Consider the following 493-residue polypeptide: Probable cytochrome P450 313a2 (493 aa).

C438 contacts heme.

It belongs to the cytochrome P450 family. Heme serves as cofactor.

The protein resides in the endoplasmic reticulum membrane. It is found in the microsome membrane. Functionally, may be involved in the metabolism of insect hormones and in the breakdown of synthetic insecticides. The chain is Probable cytochrome P450 313a2 (Cyp313a2) from Drosophila melanogaster (Fruit fly).